Here is a 472-residue protein sequence, read N- to C-terminus: MAGKTLYDKLWDDHVVTQRDDGSCLLYIDRHLLHEVTSPQAFEGLQLAGRQPWRLSANVATPDHNVPTSKKERDQGIAGIEDDTSRIQVQTLDDNCKAFNIVEFGINDIRQGIVHVVGPEQGLTLPGMTVVCGDSHTATHGAFGCLAHGIGTSEVEHVLATQCLVQKKSKNMLVRVDGVLGKGVTPKDVVLAIIGKIGTAGGTGYAIEFGGQVFRDMSIEGRMTVCNMAIEAGARVGMVAVDDKTIEYVKGRSYAPKGEQWEQAVAYWNTLHSDDDAVFDAVVELNGAEIEPQVSWGTSPEMVIPVSKAVPTLEQAKDDVQRNDWTRAYQYMGLNAGQALADIQLDRVFIGSCTNSRIEDIRAAAEVVKGRKVAPSIKQAMIVPGSGLVKQQAEKEGLDKIFLEAGFEWREPGCSMCLAMNADKLQPGEHCASTSNRNFEGRQGNGGRTHLVSPAMAAAAAIAGHFVDVRSF.

Residues cysteine 353, cysteine 414, and cysteine 417 each coordinate [4Fe-4S] cluster.

Belongs to the aconitase/IPM isomerase family. LeuC type 1 subfamily. As to quaternary structure, heterodimer of LeuC and LeuD. [4Fe-4S] cluster is required as a cofactor.

It carries out the reaction (2R,3S)-3-isopropylmalate = (2S)-2-isopropylmalate. Its pathway is amino-acid biosynthesis; L-leucine biosynthesis; L-leucine from 3-methyl-2-oxobutanoate: step 2/4. Its function is as follows. Catalyzes the isomerization between 2-isopropylmalate and 3-isopropylmalate, via the formation of 2-isopropylmaleate. This is 3-isopropylmalate dehydratase large subunit from Acinetobacter baumannii (strain AB307-0294).